The sequence spans 243 residues: uncharacterized protein (243 aa).

This is an uncharacterized protein from Methanocaldococcus jannaschii (strain ATCC 43067 / DSM 2661 / JAL-1 / JCM 10045 / NBRC 100440) (Methanococcus jannaschii).